The sequence spans 171 residues: Transcription antitermination protein NusB (171 aa).

It belongs to the NusB family.

Functionally, involved in transcription antitermination. Required for transcription of ribosomal RNA (rRNA) genes. Binds specifically to the boxA antiterminator sequence of the ribosomal RNA (rrn) operons. In Brucella abortus (strain S19), this protein is Transcription antitermination protein NusB.